The following is a 103-amino-acid chain: Large ribosomal subunit protein uL24 (103 aa).

Belongs to the universal ribosomal protein uL24 family. In terms of assembly, part of the 50S ribosomal subunit.

One of two assembly initiator proteins, it binds directly to the 5'-end of the 23S rRNA, where it nucleates assembly of the 50S subunit. In terms of biological role, one of the proteins that surrounds the polypeptide exit tunnel on the outside of the subunit. The chain is Large ribosomal subunit protein uL24 from Haemophilus ducreyi (strain 35000HP / ATCC 700724).